The sequence spans 99 residues: Putative UPF0320 protein YDR543C (99 aa).

The tract at residues 80 to 99 is disordered; the sequence is EKSPPKSPKHKNILSFNNNT.

It belongs to the UPF0320 family.

This chain is Putative UPF0320 protein YDR543C, found in Saccharomyces cerevisiae (strain ATCC 204508 / S288c) (Baker's yeast).